Reading from the N-terminus, the 274-residue chain is Bis(5'-nucleosyl)-tetraphosphatase, symmetrical (274 aa).

The protein belongs to the Ap4A hydrolase family.

The catalysed reaction is P(1),P(4)-bis(5'-adenosyl) tetraphosphate + H2O = 2 ADP + 2 H(+). Hydrolyzes diadenosine 5',5'''-P1,P4-tetraphosphate to yield ADP. The protein is Bis(5'-nucleosyl)-tetraphosphatase, symmetrical of Buchnera aphidicola subsp. Acyrthosiphon pisum (strain Tuc7).